The chain runs to 513 residues: Alanine--glyoxylate aminotransferase 2, mitochondrial (513 aa).

Residues 1–40 (MSLAWRNLQKPFYLETSLRILQMRPSLSLGASRIAVPKLT) constitute a mitochondrion transit peptide. Lys-56 is modified (N6-acetyllysine). Lys-70 is subject to N6-acetyllysine; alternate. Lys-70 carries the N6-succinyllysine; alternate modification. Lys-83 is modified (N6-acetyllysine). Lys-261 bears the N6-acetyllysine; alternate mark. Lys-261 carries the N6-succinyllysine; alternate modification. At Lys-303 the chain carries N6-succinyllysine. The residue at position 349 (Lys-349) is an N6-(pyridoxal phosphate)lysine. Residues Lys-416 and Lys-419 each carry the N6-acetyllysine; alternate modification. N6-succinyllysine; alternate is present on residues Lys-416 and Lys-419. Residue Lys-453 is modified to N6-acetyllysine.

Belongs to the class-III pyridoxal-phosphate-dependent aminotransferase family. In terms of assembly, homotetramer. The cofactor is pyridoxal 5'-phosphate. In terms of tissue distribution, expressed in the liver and kidney.

Its subcellular location is the mitochondrion. The catalysed reaction is glyoxylate + L-alanine = glycine + pyruvate. The enzyme catalyses (R)-3-amino-2-methylpropanoate + pyruvate = 2-methyl-3-oxopropanoate + L-alanine. It carries out the reaction 3-oxopropanoate + L-alanine = beta-alanine + pyruvate. It catalyses the reaction 2-oxobutanoate + L-alanine = (2S)-2-aminobutanoate + pyruvate. The catalysed reaction is N(omega),N(omega)-dimethyl-L-arginine + pyruvate = 5-(3,3-dimethylguanidino)-2-oxopentanoate + L-alanine. The enzyme catalyses N(omega),N('omega)-dimethyl-L-arginine + pyruvate = 5-(3,3'-dimethylguanidino)-2-oxopentanoate + L-alanine. It carries out the reaction N(omega),N(omega)-dimethyl-L-arginine + glyoxylate = 5-(3,3-dimethylguanidino)-2-oxopentanoate + glycine. It catalyses the reaction N(omega),N('omega)-dimethyl-L-arginine + glyoxylate = 5-(3,3'-dimethylguanidino)-2-oxopentanoate + glycine. The catalysed reaction is N(omega)-methyl-L-arginine + pyruvate = 5-(3-methylguanidino)-2-oxopentanoate + L-alanine. The enzyme catalyses N(omega)-methyl-L-arginine + glyoxylate = 5-(3-methylguanidino)-2-oxopentanoate + glycine. It carries out the reaction L-ornithine + pyruvate = 5-amino-2-oxopentanoate + L-alanine. It catalyses the reaction L-ornithine + glyoxylate = 5-amino-2-oxopentanoate + glycine. The catalysed reaction is (2S)-2-aminobutanoate + glyoxylate = 2-oxobutanoate + glycine. The enzyme catalyses N(omega),N(omega)-dimethyl-L-arginine + oxaloacetate = 5-(3,3-dimethylguanidino)-2-oxopentanoate + L-aspartate. It carries out the reaction oxaloacetate + L-alanine = L-aspartate + pyruvate. It catalyses the reaction N(omega),N(omega)-dimethyl-L-arginine + 2-oxobutanoate = 5-(3,3-dimethylguanidino)-2-oxopentanoate + (2S)-2-aminobutanoate. The catalysed reaction is 2-oxopentanoate + N(omega),N(omega)-dimethyl-L-arginine = 5-(3,3-dimethylguanidino)-2-oxopentanoate + L-2-aminopentanoate. The enzyme catalyses 2-oxohexanoate + N(omega),N(omega)-dimethyl-L-arginine = L-2-aminohexanoate + 5-(3,3-dimethylguanidino)-2-oxopentanoate. Its activity is regulated as follows. (R)-3-amino-2-methylpropionate--pyruvate transaminase and beta-alanine-pyruvate aminotransferase are inhibited by aminooxyacetic acid. Its function is as follows. Multifunctional aminotransferase with a broad substrate specificity. Catalyzes the conversion of glyoxylate to glycine using alanine as the amino donor. Catalyzes metabolism of not L- but the D-isomer of D-beta-aminoisobutyric acid to generate 2-methyl-3-oxopropanoate and alanine. Catalyzes the transfer of the amino group from beta-alanine to pyruvate to yield L-alanine and 3-oxopropanoate. Can metabolize NG-monomethyl-L-arginine (NMMA), asymmetric NG,NG-dimethyl-L-arginine (ADMA) and symmetric NG,N'G-dimethyl-L-arginine (SDMA). ADMA is a potent inhibitor of nitric-oxide (NO) synthase, and this activity provides mechanism through which the kidney regulates blood pressure. In Mus musculus (Mouse), this protein is Alanine--glyoxylate aminotransferase 2, mitochondrial (Agxt2).